The primary structure comprises 246 residues: Transcription factor A, mitochondrial (246 aa).

A mitochondrion-targeting transit peptide spans 1 to 42 (MAFLRSMWGVLSALGRSGAELCTGCGSRLRSPFSFVYLPRWF). A DNA-binding region (HMG box 1) is located at residues 50–118 (PKKPVSSYLR…VYKEEISRFK (69 aa)). A phosphoserine; by PKA mark is found at serine 55, serine 56, and serine 61. Phosphothreonine is present on threonine 122. The segment at residues 155 to 219 (PKRPRSAYNV…RYHNEMKSWE (65 aa)) is a DNA-binding region (HMG box 2). At serine 160 the chain carries Phosphoserine; by PKA. Serine 193 and serine 195 each carry phosphoserine.

In terms of assembly, monomer; binds DNA as a monomer. Homodimer. Component of the mitochondrial transcription initiation complex, composed at least of TFB2M, TFAM and POLRMT. In this complex TFAM recruits POLRMT to the promoter whereas TFB2M induces structural changes in POLRMT to enable promoter opening and trapping of the DNA non-template strand. Upon metabolic stress, forms a complex composed of FOXO3, SIRT3, TFAM and POLRMT. Interacts with TFB1M and TFB2M. Interacts with CLPX; this enhances DNA-binding. Post-translationally, phosphorylation by PKA within the HMG box 1 impairs DNA binding and promotes degradation by the AAA+ Lon protease.

It is found in the mitochondrion. Its subcellular location is the mitochondrion matrix. The protein localises to the mitochondrion nucleoid. In terms of biological role, binds to the mitochondrial light strand promoter and functions in mitochondrial transcription regulation. Component of the mitochondrial transcription initiation complex, composed at least of TFB2M, TFAM and POLRMT that is required for basal transcription of mitochondrial DNA. In this complex, TFAM recruits POLRMT to a specific promoter whereas TFB2M induces structural changes in POLRMT to enable promoter opening and trapping of the DNA non-template strand. Required for accurate and efficient promoter recognition by the mitochondrial RNA polymerase. Promotes transcription initiation from the HSP1 and the light strand promoter by binding immediately upstream of transcriptional start sites. Is able to unwind DNA. Bends the mitochondrial light strand promoter DNA into a U-turn shape via its HMG boxes. Required for maintenance of normal levels of mitochondrial DNA. May play a role in organizing and compacting mitochondrial DNA. In Homo sapiens (Human), this protein is Transcription factor A, mitochondrial.